A 176-amino-acid chain; its full sequence is MSKKNPNLEDELSLFQDAVKGVKKFTHDTIITRRQQNSKVDKAKVSSKETQNHEFYFSDEFEPHLNEHGPTQYARTGVSKYEVKKLRRGIYVPDMYLDMHGMTQQEAKRELAAMLAACIKESVSCACVMHGIGKHILKKKAPLWLAQHPDVMAFHQAPLEFGGNGALLVLIDIPER.

The Smr domain maps to 97 to 172 (LDMHGMTQQE…GNGALLVLID (76 aa)).

The protein belongs to the SmrB family. Associates with collided ribosomes, but not with correctly translating polysomes.

Functionally, acts as a ribosome collision sensor. Detects stalled/collided disomes (pairs of ribosomes where the leading ribosome is stalled and a second ribosome has collided with it) and endonucleolytically cleaves mRNA at the 5' boundary of the stalled ribosome. Stalled/collided disomes form a new interface (primarily via the 30S subunits) that binds SmrB. Cleaved mRNA becomes available for tmRNA ligation, leading to ribosomal subunit dissociation and rescue of stalled ribosomes. The chain is Ribosome rescue factor SmrB from Photobacterium profundum (strain SS9).